A 523-amino-acid polypeptide reads, in one-letter code: MSYKQTTYYPSRGNLVRNDSSPYTNTISSETNNSSTSVLSLQGASNVSLGTTGNQLYMGDLDPTWDKNTVRQIWASLGEANINVRMMWNNTLNNGSRSSMGPKNNQGYCFVDFPSSTHAANALLKNGMLIPNFPNKKLKLNWATSSYSNSNNSLNNVKSGNNCSIFVGDLAPNVTESQLFELFINRYASTSHAKIVHDQVTGMSKGYGFVKFTNSDEQQLALSEMQGVFLNGRAIKVGPTSGQQQHVSGNNDYNRSSSSLNNENVDSRFLSKGQSFLSNGNNNMGFKRNHMSQFIYPVQQQPSLNHFTDPNNTTVFIGGLSSLVTEDELRAYFQPFGTIVYVKIPVGKCCGFVQYVDRLSAEAAIAGMQGFPIANSRVRLSWGRSAKQTALLQQAMLSNSLQVQQQQPGLQQPNYGYIPSSTCEAPVLPDNNVSSTMLPGCQILNYSNPYANANGLGSNNFSFYSNNNATNTQATSLLADTSSMDLSGTGGQQVIMQGSEAVVNSTNAMLNRLEQGSNGFMFA.

The segment at Met1 to Ser35 is disordered. Residues Thr24–Ser35 show a composition bias toward low complexity. 3 consecutive RRM domains span residues Asn54–Ser145, Cys163–Gly242, and Thr313–Ser385. The tract at residues Pro239–Leu260 is disordered. The span at Thr240–Leu260 shows a compositional bias: polar residues.

In terms of assembly, component of the U1 small nuclear ribonucleoprotein complex (U1 snRNP).

Functionally, component of the U1 small nuclear ribonucleoprotein complex (U1 snRNP) involved in the initiation of meiotic recombination. Involved in the formation of DSBs at recombination hot-spots through meiosis-specific splicing of REC107 pre-mRNA. Collaborates with MER1 to promote splicing of essential meiotic mRNAs REC10, AMA1, MER3, HFM1, SPO22 and PCH2. NAM8 interacts with the pre-mRNA downstream of the 5' splice site, in a region of non-conserved sequence and is required for efficient splicing of uncapped RNA precursor. In Saccharomyces cerevisiae (strain ATCC 204508 / S288c) (Baker's yeast), this protein is Protein NAM8.